The following is a 150-amino-acid chain: Large ribosomal subunit protein bL9 (150 aa).

Belongs to the bacterial ribosomal protein bL9 family.

In terms of biological role, binds to the 23S rRNA. The chain is Large ribosomal subunit protein bL9 from Paraburkholderia phymatum (strain DSM 17167 / CIP 108236 / LMG 21445 / STM815) (Burkholderia phymatum).